A 20-amino-acid polypeptide reads, in one-letter code: Cytochrome c oxidase subunit 5A-1, mitochondrial (20 aa).

This sequence belongs to the cytochrome c oxidase subunit 5A family. In terms of assembly, component of the cytochrome c oxidase (complex IV, CIV), a multisubunit enzyme composed of 14 subunits. The complex is composed of a catalytic core of 3 subunits MT-CO1, MT-CO2 and MT-CO3, encoded in the mitochondrial DNA, and 11 supernumerary subunits COX4I, COX5A, COX5B, COX6A, COX6B, COX6C, COX7A, COX7B, COX7C, COX8 and NDUFA4, which are encoded in the nuclear genome. The complex exists as a monomer or a dimer and forms supercomplexes (SCs) in the inner mitochondrial membrane with NADH-ubiquinone oxidoreductase (complex I, CI) and ubiquinol-cytochrome c oxidoreductase (cytochrome b-c1 complex, complex III, CIII), resulting in different assemblies (supercomplex SCI(1)III(2)IV(1) and megacomplex MCI(2)III(2)IV(2)). Interacts with AFG1L. Interacts with RAB5IF.

It is found in the mitochondrion inner membrane. Its pathway is energy metabolism; oxidative phosphorylation. In terms of biological role, component of the cytochrome c oxidase, the last enzyme in the mitochondrial electron transport chain which drives oxidative phosphorylation. The respiratory chain contains 3 multisubunit complexes succinate dehydrogenase (complex II, CII), ubiquinol-cytochrome c oxidoreductase (cytochrome b-c1 complex, complex III, CIII) and cytochrome c oxidase (complex IV, CIV), that cooperate to transfer electrons derived from NADH and succinate to molecular oxygen, creating an electrochemical gradient over the inner membrane that drives transmembrane transport and the ATP synthase. Cytochrome c oxidase is the component of the respiratory chain that catalyzes the reduction of oxygen to water. Electrons originating from reduced cytochrome c in the intermembrane space (IMS) are transferred via the dinuclear copper A center (CU(A)) of subunit 2 and heme A of subunit 1 to the active site in subunit 1, a binuclear center (BNC) formed by heme A3 and copper B (CU(B)). The BNC reduces molecular oxygen to 2 water molecules using 4 electrons from cytochrome c in the IMS and 4 protons from the mitochondrial matrix. This chain is Cytochrome c oxidase subunit 5A-1, mitochondrial, found in Thunnus obesus (Bigeye tuna).